We begin with the raw amino-acid sequence, 93 residues long: Pyrimidine/purine nucleoside phosphorylase (93 aa).

It belongs to the nucleoside phosphorylase PpnP family.

It catalyses the reaction a purine D-ribonucleoside + phosphate = a purine nucleobase + alpha-D-ribose 1-phosphate. The catalysed reaction is adenosine + phosphate = alpha-D-ribose 1-phosphate + adenine. The enzyme catalyses cytidine + phosphate = cytosine + alpha-D-ribose 1-phosphate. It carries out the reaction guanosine + phosphate = alpha-D-ribose 1-phosphate + guanine. It catalyses the reaction inosine + phosphate = alpha-D-ribose 1-phosphate + hypoxanthine. The catalysed reaction is thymidine + phosphate = 2-deoxy-alpha-D-ribose 1-phosphate + thymine. The enzyme catalyses uridine + phosphate = alpha-D-ribose 1-phosphate + uracil. It carries out the reaction xanthosine + phosphate = alpha-D-ribose 1-phosphate + xanthine. Functionally, catalyzes the phosphorolysis of diverse nucleosides, yielding D-ribose 1-phosphate and the respective free bases. Can use uridine, adenosine, guanosine, cytidine, thymidine, inosine and xanthosine as substrates. Also catalyzes the reverse reactions. The sequence is that of Pyrimidine/purine nucleoside phosphorylase from Shewanella pealeana (strain ATCC 700345 / ANG-SQ1).